A 275-amino-acid polypeptide reads, in one-letter code: Type III pantothenate kinase (275 aa).

9-16 provides a ligand contact to ATP; that stretch reads DIGNTRLK. Substrate is bound by residues Tyr114 and 121 to 124; that span reads GVDR. The active-site Proton acceptor is the Asp123. Position 147 (Thr147) interacts with ATP. Residue Thr209 coordinates substrate.

Belongs to the type III pantothenate kinase family. Homodimer. Requires NH4(+) as cofactor. It depends on K(+) as a cofactor.

It localises to the cytoplasm. It catalyses the reaction (R)-pantothenate + ATP = (R)-4'-phosphopantothenate + ADP + H(+). It participates in cofactor biosynthesis; coenzyme A biosynthesis; CoA from (R)-pantothenate: step 1/5. In terms of biological role, catalyzes the phosphorylation of pantothenate (Pan), the first step in CoA biosynthesis. The polypeptide is Type III pantothenate kinase (Cupriavidus pinatubonensis (strain JMP 134 / LMG 1197) (Cupriavidus necator (strain JMP 134))).